Consider the following 416-residue polypeptide: Cysteate synthase (416 aa).

An N6-(pyridoxal phosphate)lysine modification is found at Lys-104. Position 130 (Asn-130) interacts with pyridoxal 5'-phosphate.

Belongs to the threonine synthase family. Cysteate synthase subfamily. Homotrimer. Pyridoxal 5'-phosphate serves as cofactor.

It catalyses the reaction O-phospho-L-serine + sulfite + H(+) = L-cysteate + phosphate. Its pathway is cofactor biosynthesis; coenzyme M biosynthesis. Its function is as follows. Specifically catalyzes the beta-elimination of phosphate from L-phosphoserine and the beta-addition of sulfite to the dehydroalanine intermediate to produce L-cysteate. This chain is Cysteate synthase, found in Methanosarcina barkeri (strain Fusaro / DSM 804).